Here is an 807-residue protein sequence, read N- to C-terminus: MTPPVGNNPPSGSAIRLAKLMSTTRAPSTRKTNSVFSAYAQGLKRKAEASSSRIQNVRARARGHGCGRTSPSSSTAEAERHFIQSVSSSNANGTATDPSQDDMAIVHEPQPQPQPQPEPQPQPQPEPEEEAPQKRAKKCTSDVWQHFTKKEIEVEVDGKKYVQVWGHCNFPNCKAKYRAEGHHGTSGFRNHLRTSHSLVKGQLCLKSEKDHGKDINLIEPYKYDEVVSLKKLHLAIIMHEYPFNIVEHEYFVEFVKSLRPHFPIKSRVTARKYIMDLYLEEKEKLYGKLKDVQSRFSTTMDMWTSCQNKSYMCVTIHWIDDDWCLQKRIVGFFHVEGRHTGQRLSQTFTAIMVKWNIEKKLFALSLDNASANEVAVHDIIEDLQDTDSNLVCDGAFFHVRCACHILNLVAKDGLAVIAGTIEKIKAIVLAVKSSPLQWEELMKCASECDLDKSKGISYDVSTRWNSTYLMLRDALYYKPALIRLKTSDPRRYDAICPKAEEWKMALTLFKCLKKFFDLTELLSGTQYSTANLFYKGFCEIKDLIDQWCVHEKFVIRRMAVAMSEKFEKYWKVSNIALAVACFLDPRYKKILIEFYMKKFHGDSYKVHVDDFVRVIRKLYQFYSSCSPSAPKTKTTTNDSMDDTLMENEDDEFQNYLHELKDYDQVESNELDKYMSEPLLKHSGQFDILSWWRGRVAEYPILTQIARDVLAIQVSTVASESAFSAGGRVVDPYRNRLGSEIVEALICTKDWVAASRKGATYFPTMIGDLEVLDSVIAAATNHENHMDEDEDAIEFSKNNEDVASGSSP.

Disordered stretches follow at residues 42–140 and 785–807; these read GLKR…KKCT and MDED…GSSP. Polar residues predominate over residues 84 to 98; sequence QSVSSSNANGTATDP. 10 consecutive repeat copies span residues 109–110, 111–112, 113–114, 115–116, 117–118, 119–120, 121–122, 123–124, 125–126, and 127–128. The tract at residues 109 to 128 is 10 X 2 AA tandem repeats of P-[QE]; it reads PQPQPQPQPEPQPQPQPEPE. The segment covering 110–125 has biased composition (pro residues); it reads QPQPQPQPEPQPQPQP.

The sequence is that of Putative AC transposase from Zea mays (Maize).